Consider the following 130-residue polypeptide: Phosphoribosyl-AMP cyclohydrolase (130 aa).

Asp77 is a Mg(2+) binding site. Cys78 contributes to the Zn(2+) binding site. Positions 79 and 81 each coordinate Mg(2+). Zn(2+) is bound by residues Cys95 and Cys102.

The protein belongs to the PRA-CH family. As to quaternary structure, homodimer. Requires Mg(2+) as cofactor. It depends on Zn(2+) as a cofactor.

It localises to the cytoplasm. It carries out the reaction 1-(5-phospho-beta-D-ribosyl)-5'-AMP + H2O = 1-(5-phospho-beta-D-ribosyl)-5-[(5-phospho-beta-D-ribosylamino)methylideneamino]imidazole-4-carboxamide. It participates in amino-acid biosynthesis; L-histidine biosynthesis; L-histidine from 5-phospho-alpha-D-ribose 1-diphosphate: step 3/9. In terms of biological role, catalyzes the hydrolysis of the adenine ring of phosphoribosyl-AMP. This Pseudomonas syringae pv. syringae (strain B728a) protein is Phosphoribosyl-AMP cyclohydrolase.